The chain runs to 941 residues: Cell wall protein IFF3 (941 aa).

Positions 1–20 (MQLFQNILVSIALLTQVVFA) are cleaved as a signal peptide. N36, N367, N686, N732, N790, N818, N825, N884, and N917 each carry an N-linked (GlcNAc...) asparagine glycan. The GPI-anchor amidated asparagine moiety is linked to residue N917. Positions 918 to 941 (GSNKESIENIKYLTLVVFGLMMFM) are cleaved as a propeptide — removed in mature form.

This sequence belongs to the HYR1/IFF family. Post-translationally, the GPI-anchor is attached to the protein in the endoplasmic reticulum and serves to target the protein to the cell surface. There, the glucosamine-inositol phospholipid moiety is cleaved off and the GPI-modified mannoprotein is covalently attached via its lipidless GPI glycan remnant to the 1,6-beta-glucan of the outer cell wall layer.

Its subcellular location is the secreted. The protein resides in the cell wall. It localises to the membrane. GPI-anchored cell wall protein involved in cell wall organization, hyphal growth, as well as in host-fungal interaction and virulence. The protein is Cell wall protein IFF3 (IFF3) of Candida albicans (strain SC5314 / ATCC MYA-2876) (Yeast).